The following is a 138-amino-acid chain: Small ribosomal subunit protein uS11c (138 aa).

The tract at residues 1–23 is disordered; sequence MAKPILRIGSRKNTRSSSRKNVR. Over residues 9 to 23 the composition is skewed to basic residues; sequence GSRKNTRSSSRKNVR.

This sequence belongs to the universal ribosomal protein uS11 family. As to quaternary structure, part of the 30S ribosomal subunit.

It localises to the plastid. Its subcellular location is the chloroplast. The polypeptide is Small ribosomal subunit protein uS11c (Nasturtium officinale (Watercress)).